The following is a 101-amino-acid chain: Venom peptide Pc (101 aa).

An N-terminal signal peptide occupies residues 1–20 (MSHLRIAVIFLCTLFALTAG).

This sequence belongs to the scorpion La1-like peptide family. Contains 4 disulfide bonds. As to expression, expressed by the venom gland.

It localises to the secreted. The chain is Venom peptide Pc from Pandinus cavimanus (Tanzanian red clawed scorpion).